Reading from the N-terminus, the 389-residue chain is Chorismate synthase (389 aa).

Residues R40 and R46 each contribute to the NADP(+) site. FMN-binding positions include 131–133, 252–253, G297, 312–316, and R338; these read RSS, NA, and KPIPT.

The protein belongs to the chorismate synthase family. As to quaternary structure, homotetramer. FMNH2 is required as a cofactor.

It carries out the reaction 5-O-(1-carboxyvinyl)-3-phosphoshikimate = chorismate + phosphate. It participates in metabolic intermediate biosynthesis; chorismate biosynthesis; chorismate from D-erythrose 4-phosphate and phosphoenolpyruvate: step 7/7. Functionally, catalyzes the anti-1,4-elimination of the C-3 phosphate and the C-6 proR hydrogen from 5-enolpyruvylshikimate-3-phosphate (EPSP) to yield chorismate, which is the branch point compound that serves as the starting substrate for the three terminal pathways of aromatic amino acid biosynthesis. This reaction introduces a second double bond into the aromatic ring system. This is Chorismate synthase from Lactiplantibacillus plantarum (strain ATCC BAA-793 / NCIMB 8826 / WCFS1) (Lactobacillus plantarum).